A 525-amino-acid polypeptide reads, in one-letter code: GMP synthase [glutamine-hydrolyzing] (525 aa).

The region spanning Arg-9–Leu-207 is the Glutamine amidotransferase type-1 domain. The active-site Nucleophile is Cys-86. Catalysis depends on residues His-181 and Glu-183. The GMPS ATP-PPase domain occupies Trp-208–Arg-400. Ser-235 to Ser-241 is a binding site for ATP.

In terms of assembly, homodimer.

It catalyses the reaction XMP + L-glutamine + ATP + H2O = GMP + L-glutamate + AMP + diphosphate + 2 H(+). It functions in the pathway purine metabolism; GMP biosynthesis; GMP from XMP (L-Gln route): step 1/1. Functionally, catalyzes the synthesis of GMP from XMP. This is GMP synthase [glutamine-hydrolyzing] from Klebsiella pneumoniae (strain 342).